Consider the following 69-residue polypeptide: Cytochrome b-c1 complex subunit 6 (69 aa).

2 disulfide bridges follow: cysteine 17/cysteine 59 and cysteine 31/cysteine 45.

It belongs to the UQCRH/QCR6 family. Component of the ubiquinol-cytochrome c oxidoreductase (cytochrome b-c1 complex, complex III, CIII), a multisubunit enzyme composed of 3 respiratory subunits cytochrome b, cytochrome c1 and Rieske protein, 2 core protein subunits, and additional low-molecular weight protein subunits. The complex exists as an obligatory dimer and forms supercomplexes (SCs) in the inner mitochondrial membrane with cytochrome c oxidase (complex IV, CIV).

It localises to the mitochondrion inner membrane. Component of the ubiquinol-cytochrome c oxidoreductase, a multisubunit transmembrane complex that is part of the mitochondrial electron transport chain which drives oxidative phosphorylation. The respiratory chain contains 3 multisubunit complexes succinate dehydrogenase (complex II, CII), ubiquinol-cytochrome c oxidoreductase (cytochrome b-c1 complex, complex III, CIII) and cytochrome c oxidase (complex IV, CIV), that cooperate to transfer electrons derived from NADH and succinate to molecular oxygen, creating an electrochemical gradient over the inner membrane that drives transmembrane transport and the ATP synthase. The cytochrome b-c1 complex catalyzes electron transfer from ubiquinol to cytochrome c, linking this redox reaction to translocation of protons across the mitochondrial inner membrane, with protons being carried across the membrane as hydrogens on the quinol. In the process called Q cycle, 2 protons are consumed from the matrix, 4 protons are released into the intermembrane space and 2 electrons are passed to cytochrome c. This is Cytochrome b-c1 complex subunit 6 from Solanum tuberosum (Potato).